A 191-amino-acid polypeptide reads, in one-letter code: Akirin-1 (191 aa).

Residues 17–70 (LLSPGSPKRRRCAPLPGPTPGLRPPDAEPPPLQMQTPPASLQQPAPPGSERRLP) form a disordered region. The residue at position 22 (serine 22) is a Phosphoserine. A Nuclear localization signal motif is present at residues 23–28 (PKRRRC). Residues 31 to 48 (LPGPTPGLRPPDAEPPPL) are compositionally biased toward pro residues. Over residues 49 to 59 (QMQTPPASLQQ) the composition is skewed to polar residues. Residue threonine 71 is modified to Phosphothreonine. The SYVS motif signature appears at 188 to 191 (SYVS).

This sequence belongs to the akirin family. As to expression, expressed in macrophages and satellite cells.

The protein resides in the nucleus. Molecular adapter that acts as a bridge between proteins, and which is involved skeletal muscle development. Functions as a signal transducer for MSTN during skeletal muscle regeneration and myogenesis. May regulate chemotaxis of both macrophages and myoblasts by reorganising actin cytoskeleton, leading to more efficient lamellipodia formation via a PI3 kinase dependent pathway. In contrast to AKIRIN2, not involved in nuclear import of proteasomes. This Mus musculus (Mouse) protein is Akirin-1.